The following is a 597-amino-acid chain: Elongation factor 4 (597 aa).

Residues 2–184 (KNIRNFSIIA…TMIAKIPPPV (183 aa)) enclose the tr-type G domain. GTP is bound by residues 14-19 (DHGKST) and 131-134 (NKID).

The protein belongs to the TRAFAC class translation factor GTPase superfamily. Classic translation factor GTPase family. LepA subfamily.

It localises to the cell inner membrane. It carries out the reaction GTP + H2O = GDP + phosphate + H(+). In terms of biological role, required for accurate and efficient protein synthesis under certain stress conditions. May act as a fidelity factor of the translation reaction, by catalyzing a one-codon backward translocation of tRNAs on improperly translocated ribosomes. Back-translocation proceeds from a post-translocation (POST) complex to a pre-translocation (PRE) complex, thus giving elongation factor G a second chance to translocate the tRNAs correctly. Binds to ribosomes in a GTP-dependent manner. This Methylobacillus flagellatus (strain ATCC 51484 / DSM 6875 / VKM B-1610 / KT) protein is Elongation factor 4.